Here is a 453-residue protein sequence, read N- to C-terminus: Signal recognition particle protein (453 aa).

GTP-binding positions include 107-114, 190-194, and 248-251; these read GLQGAGKT, DTAGR, and TKVD.

The protein belongs to the GTP-binding SRP family. SRP54 subfamily. Part of the signal recognition particle protein translocation system, which is composed of SRP and FtsY. SRP is a ribonucleoprotein composed of Ffh and a 4.5S RNA molecule.

The protein localises to the cytoplasm. It carries out the reaction GTP + H2O = GDP + phosphate + H(+). In terms of biological role, involved in targeting and insertion of nascent membrane proteins into the cytoplasmic membrane. Binds to the hydrophobic signal sequence of the ribosome-nascent chain (RNC) as it emerges from the ribosomes. The SRP-RNC complex is then targeted to the cytoplasmic membrane where it interacts with the SRP receptor FtsY. Interaction with FtsY leads to the transfer of the RNC complex to the Sec translocase for insertion into the membrane, the hydrolysis of GTP by both Ffh and FtsY, and the dissociation of the SRP-FtsY complex into the individual components. This is Signal recognition particle protein from Escherichia coli O157:H7.